Consider the following 72-residue polypeptide: Translation initiation factor IF-1 (72 aa).

The 72-residue stretch at 1–72 (MAKDDVIEID…DKGRITYRYK (72 aa)) folds into the S1-like domain.

It belongs to the IF-1 family. In terms of assembly, component of the 30S ribosomal translation pre-initiation complex which assembles on the 30S ribosome in the order IF-2 and IF-3, IF-1 and N-formylmethionyl-tRNA(fMet); mRNA recruitment can occur at any time during PIC assembly.

It localises to the cytoplasm. In terms of biological role, one of the essential components for the initiation of protein synthesis. Stabilizes the binding of IF-2 and IF-3 on the 30S subunit to which N-formylmethionyl-tRNA(fMet) subsequently binds. Helps modulate mRNA selection, yielding the 30S pre-initiation complex (PIC). Upon addition of the 50S ribosomal subunit IF-1, IF-2 and IF-3 are released leaving the mature 70S translation initiation complex. In Campylobacter fetus subsp. fetus (strain 82-40), this protein is Translation initiation factor IF-1.